The sequence spans 591 residues: Aspartate--tRNA(Asp/Asn) ligase (591 aa).

Residue E175 coordinates L-aspartate. The aspartate stretch occupies residues 199–202 (QQFK). Positions 221 and 453 each coordinate L-aspartate. An ATP-binding site is contributed by 221–223 (RDE). E486 provides a ligand contact to ATP. R493 lines the L-aspartate pocket. Residue 538-541 (GIDR) coordinates ATP.

It belongs to the class-II aminoacyl-tRNA synthetase family. Type 1 subfamily. In terms of assembly, homodimer.

It localises to the cytoplasm. It catalyses the reaction tRNA(Asx) + L-aspartate + ATP = L-aspartyl-tRNA(Asx) + AMP + diphosphate. Aspartyl-tRNA synthetase with relaxed tRNA specificity since it is able to aspartylate not only its cognate tRNA(Asp) but also tRNA(Asn). Reaction proceeds in two steps: L-aspartate is first activated by ATP to form Asp-AMP and then transferred to the acceptor end of tRNA(Asp/Asn). This chain is Aspartate--tRNA(Asp/Asn) ligase, found in Roseobacter denitrificans (strain ATCC 33942 / OCh 114) (Erythrobacter sp. (strain OCh 114)).